A 176-amino-acid chain; its full sequence is CASP-like protein 5A1 (176 aa).

Topologically, residues 1–45 (MDASHPAVYPVGVPPTAVDPPPRVRMKDYEGMPSTLGGLVLRSGQ) are cytoplasmic. Residues 46–66 (FACAVTALSIMISIPDFSSVT) traverse the membrane as a helical segment. A topological domain (extracellular) is located at residue Ala67. A helical transmembrane segment spans residues 68–88 (FCYLVAAMALQLLWSVSLAVV). Topologically, residues 89-102 (DGYALLLRRTLHNP) are cytoplasmic. The helical transmembrane segment at 103-123 (VLLSLLVIGDWVTSTLSLAAA) threads the bilayer. The Extracellular segment spans residues 124–151 (CSSAGITVLIDSDLAQCAHNHCGRYEAA). The chain crosses the membrane as a helical span at residues 152–172 (VAMAFLTWFLVSLSFFFSFWL). The Cytoplasmic portion of the chain corresponds to 173-176 (LATR).

This sequence belongs to the Casparian strip membrane proteins (CASP) family. As to quaternary structure, homodimer and heterodimers.

Its subcellular location is the cell membrane. This chain is CASP-like protein 5A1, found in Selaginella moellendorffii (Spikemoss).